A 29-amino-acid chain; its full sequence is Brevinin-2Rc (29 aa).

The cysteines at positions 23 and 29 are disulfide-linked.

Expressed by the skin glands.

It is found in the secreted. Antimicrobial peptide. This Pelophylax ridibundus (Marsh frog) protein is Brevinin-2Rc.